Reading from the N-terminus, the 485-residue chain is Glutamyl-tRNA(Gln) amidotransferase subunit A (485 aa).

Residues lysine 78 and serine 153 each act as charge relay system in the active site. The active-site Acyl-ester intermediate is serine 177.

It belongs to the amidase family. GatA subfamily. As to quaternary structure, heterotrimer of A, B and C subunits.

The catalysed reaction is L-glutamyl-tRNA(Gln) + L-glutamine + ATP + H2O = L-glutaminyl-tRNA(Gln) + L-glutamate + ADP + phosphate + H(+). Allows the formation of correctly charged Gln-tRNA(Gln) through the transamidation of misacylated Glu-tRNA(Gln) in organisms which lack glutaminyl-tRNA synthetase. The reaction takes place in the presence of glutamine and ATP through an activated gamma-phospho-Glu-tRNA(Gln). The polypeptide is Glutamyl-tRNA(Gln) amidotransferase subunit A (Bacillus cytotoxicus (strain DSM 22905 / CIP 110041 / 391-98 / NVH 391-98)).